Here is a 165-residue protein sequence, read N- to C-terminus: Large ribosomal subunit protein uL11 (165 aa).

Ser38 carries the phosphoserine modification. A Glycyl lysine isopeptide (Lys-Gly) (interchain with G-Cter in SUMO2) cross-link involves residue Lys40. Residue Lys48 forms a Glycyl lysine isopeptide (Lys-Gly) (interchain with G-Cter in ubiquitin) linkage. Lys54 is modified (N6-acetyllysine). Lys83 participates in a covalent cross-link: Glycyl lysine isopeptide (Lys-Gly) (interchain with G-Cter in ubiquitin). The residue at position 165 (Ser165) is a Phosphoserine.

This sequence belongs to the universal ribosomal protein uL11 family. Component of the large ribosomal subunit. Mature ribosomes consist of a small (40S) and a large (60S) subunit. The 40S subunit contains about 33 different proteins and 1 molecule of RNA (18S). The 60S subunit contains about 49 different proteins and 3 molecules of RNA (28S, 5.8S and 5S). In terms of processing, ubiquitinated at Lys-48 and Lys-83 by RNF14 and RNF25 in response to ribosome collisions (ribosome stalling).

The protein localises to the cytoplasm. Its function is as follows. Component of the large ribosomal subunit. The ribosome is a large ribonucleoprotein complex responsible for the synthesis of proteins in the cell. Binds directly to 26S ribosomal RNA. This chain is Large ribosomal subunit protein uL11 (RPL12), found in Chinchilla lanigera (Long-tailed chinchilla).